Reading from the N-terminus, the 520-residue chain is GMP synthase [glutamine-hydrolyzing] (520 aa).

The Glutamine amidotransferase type-1 domain maps to 9–202 (TVLIVDFGSQ…IHNIAGIKGD (194 aa)). The Nucleophile role is filled by Cys-86. Residues His-176 and Glu-178 contribute to the active site. The region spanning 203-395 (WSMSAYRAKA…LGLPDSFIGR (193 aa)) is the GMPS ATP-PPase domain. 230–236 (SGGVDSS) is an ATP binding site.

In terms of assembly, homodimer.

It catalyses the reaction XMP + L-glutamine + ATP + H2O = GMP + L-glutamate + AMP + diphosphate + 2 H(+). The protein operates within purine metabolism; GMP biosynthesis; GMP from XMP (L-Gln route): step 1/1. In terms of biological role, catalyzes the synthesis of GMP from XMP. This Rhizobium rhizogenes (strain K84 / ATCC BAA-868) (Agrobacterium radiobacter) protein is GMP synthase [glutamine-hydrolyzing].